We begin with the raw amino-acid sequence, 469 residues long: 3-isopropylmalate dehydratase large subunit (469 aa).

The [4Fe-4S] cluster site is built by cysteine 349, cysteine 410, and cysteine 413.

Belongs to the aconitase/IPM isomerase family. LeuC type 1 subfamily. As to quaternary structure, heterodimer of LeuC and LeuD. The cofactor is [4Fe-4S] cluster.

The catalysed reaction is (2R,3S)-3-isopropylmalate = (2S)-2-isopropylmalate. It functions in the pathway amino-acid biosynthesis; L-leucine biosynthesis; L-leucine from 3-methyl-2-oxobutanoate: step 2/4. Its function is as follows. Catalyzes the isomerization between 2-isopropylmalate and 3-isopropylmalate, via the formation of 2-isopropylmaleate. The protein is 3-isopropylmalate dehydratase large subunit of Neisseria gonorrhoeae (strain NCCP11945).